The following is a 457-amino-acid chain: Na(+)/H(+) antiporter NhaA (457 aa).

Helical transmembrane passes span 33-53, 76-96, 114-134, 142-162, 172-192, 196-216, 235-255, 308-328, 349-369, 385-405, and 419-439; these read ASGI…NSPL, FSLA…VVGM, LLPL…FLAF, AGWG…LTLL, VFVT…IALF, GLQL…ALMS, YALH…GLAI, FVHA…ALAN, TALA…WIAV, LIGV…IAGL, and VGIL…LRLT.

This sequence belongs to the NhaA Na(+)/H(+) (TC 2.A.33) antiporter family.

Its subcellular location is the cell inner membrane. The enzyme catalyses Na(+)(in) + 2 H(+)(out) = Na(+)(out) + 2 H(+)(in). Its function is as follows. Na(+)/H(+) antiporter that extrudes sodium in exchange for external protons. This Anaeromyxobacter sp. (strain Fw109-5) protein is Na(+)/H(+) antiporter NhaA.